Reading from the N-terminus, the 105-residue chain is Cell division protein FtsB (105 aa).

At 1-3 (MGK) the chain is on the cytoplasmic side. A helical transmembrane segment spans residues 4–21 (LTLLLLVLLGWLQYSLWL). At 22–105 (GKNGVHDLVR…PAAPATQDNQ (84 aa)) the chain is on the periplasmic side. Residues 28–62 (DLVRVESDVAAQQSNNAQLKARNDQLFAEIDDLNG) are a coiled coil.

It belongs to the FtsB family. In terms of assembly, part of a complex composed of FtsB, FtsL and FtsQ.

The protein localises to the cell inner membrane. Its function is as follows. Essential cell division protein. May link together the upstream cell division proteins, which are predominantly cytoplasmic, with the downstream cell division proteins, which are predominantly periplasmic. The sequence is that of Cell division protein FtsB from Sodalis glossinidius (strain morsitans).